The following is a 74-amino-acid chain: Putative membrane protein insertion efficiency factor (74 aa).

The protein belongs to the UPF0161 family.

It localises to the cell membrane. In terms of biological role, could be involved in insertion of integral membrane proteins into the membrane. The sequence is that of Putative membrane protein insertion efficiency factor from Bacillus pumilus (strain SAFR-032).